The primary structure comprises 343 residues: Major histocompatibility complex class I-related protein 1 (343 aa).

Positions 1–18 (MMFLLPFLTVFLAKQSHT) are cleaved as a signal peptide. The tract at residues 19-105 (RTHSLRYFRL…RHLQRHYNHS (87 aa)) is alpha-1. Residues 19 to 197 (RTHSLRYFRL…EYGSDALERT (179 aa)) are antigen-binding cleft. Residues 19 to 298 (RTHSLRYFRL…QESGNTLLVA (280 aa)) are Extracellular-facing. Residues Tyr25 and Arg27 each coordinate 8-(9H-purin-6-yl)-2-oxa-8-azabicyclo[3.3.1]nona-3,6-diene-4,6-dicarbaldehyde. Residues Arg27, Ser42, and Lys61 each contribute to the 5-(2-oxoethylideneamino)-6-(D-ribitylamino)uracil site. Residues Arg27, Ser42, and Lys61 each contribute to the 5-(2-oxopropylideneamino)-6-(D-ribitylamino)uracil site. Positions 27, 42, and 61 each coordinate 7-hydroxy-6-methyl-8-(1-D-ribityl)lumazine. 2 residues coordinate 8-(9H-purin-6-yl)-2-oxa-8-azabicyclo[3.3.1]nona-3,6-diene-4,6-dicarbaldehyde: Lys61 and His76. Residue Lys61 participates in 2-amino-4-oxopteridine-6-carbaldehyde binding. Lys61 provides a ligand contact to pyridoxal. A glycan (N-linked (GlcNAc...) asparagine) is linked at Asn103. The interval 106-197 (GLHTYQRMIG…EYGSDALERT (92 aa)) is alpha-2. Arg112 provides a ligand contact to 8-(9H-purin-6-yl)-2-oxa-8-azabicyclo[3.3.1]nona-3,6-diene-4,6-dicarbaldehyde. 3 residues coordinate 5-(2-oxoethylideneamino)-6-(D-ribitylamino)uracil: Arg112, Tyr170, and Gln171. 5-(2-oxopropylideneamino)-6-(D-ribitylamino)uracil is bound by residues Arg112, Tyr170, and Gln171. Residues Arg112, Tyr170, and Gln171 each contribute to the 7-hydroxy-6-methyl-8-(1-D-ribityl)lumazine site. Intrachain disulfides connect Cys116–Cys179 and Cys218–Cys274. Positions 198-289 (EHPVVRTTRK…GLQMVLEAPQ (92 aa)) are alpha-3. Residues 200–302 (PVVRTTRKET…NTLLVANTIS (103 aa)) enclose the Ig-like C1-type domain. The interval 290 to 298 (ESGNTLLVA) is connecting peptide. The chain crosses the membrane as a helical span at residues 299–319 (NTISGTIILIIVLAGVGALIW). At 320-343 (RRRSREPKEVMYQPTQVNEGSSPS) the chain is on the cytoplasmic side.

Heterotrimer that consists of MR1, B2M and metabolite antigen. Major classes of metabolite ligands presented by MR1 include riboflavin-related antigens, pyrimidines and ribityl lumazines, nucleobase adducts and folate derivatives. Forms reversible covalent Schiff base complexes with microbial pyrimidine-based metabolite, which serves as a molecular switch triggering complete folding, stable association with B2M and translocation of the ternary complex from endoplasmic reticulum to the plasma membrane. Alternatively, forms non-Schiff base complexes with ribityl lumazines. On antigen-presenting cells, the ternary complex interacts with TCR on MR1-restricted T cells. Interacts with TAPBP and TAPBPL chaperones in the endoplasmic reticulum. TAPBP associated or not with MHC class I peptide loading complex binds ligand-free MR1 or MR1-B2M complex, providing for stable MR1 pools ready for metabolite antigen processing. TAPBPL interacts with MR1 in a ligand-independent way; this interaction may stabilize MR1 pool and facilitate ligand loading and dissociation. Structurally, MR1-B2M heterodimer adopts a topology similar to classical MHC class I molecules, with alpha-1 and alpha-2 domains of MR1 forming the antigen-binding cleft composed of two alpha-helices resting on a floor of 7-stranded anti-parallel beta-pleated sheet. MR1-B2M heterodimer (via alpha-helices) interacts with TCR (via CDR domains). N-glycosylated. As to expression, expressed in kidney, liver, testis, spleen, thymus, brain, and heart.

It localises to the cell membrane. It is found in the endoplasmic reticulum membrane. Its subcellular location is the golgi apparatus membrane. The protein localises to the early endosome membrane. The protein resides in the late endosome membrane. Its function is as follows. Antigen-presenting molecule specialized in displaying microbial pyrimidine-based metabolites to alpha-beta T cell receptors (TCR) on innate-type mucosal-associated invariant T (MAIT) cells. In complex with B2M preferentially presents riboflavin-derived metabolites to semi-invariant TCRs on MAIT cells, guiding immune surveillance of the microbial metabolome at mucosal epithelial barriers. Signature pyrimidine-based microbial antigens are generated via non-enzymatic condensation of metabolite intermediates of the riboflavin pathway with by-products arising from other metabolic pathways such as glycolysis. Typical potent antigenic metabolites are 5-(2-oxoethylideneamino)-6-D-ribitylaminouracil (5-OE-RU) and 5-(2-oxopropylideneamino)-6-D-ribitylaminouracil (5-OP-RU), products of condensation of 5-amino-6-D-ribityaminouracil (5-A-RU) with glyoxal or methylglyoxal by-products, respectively. May present microbial antigens to various MAIT cell subsets, providing for unique recognition of diverse microbes, including pathogens that do not synthesize riboflavin. Upon antigen recognition, elicits rapid innate-type MAIT cell activation to eliminate pathogenic microbes by directly killing infected cells. During T cell development, drives thymic selection and post-thymic terminal differentiation of MAIT cells in a process dependent on commensal microflora. Acts as an immune sensor of cancer cell metabolome. May present a tumor-specific or -associated metabolite essential for cancer cell survival to a pan-cancer TCR on a non-MAIT CD8-positive T cell clone, triggering T cell-mediated killing of a wide range of cancer cell types. May present tumor-enriched pyridoxal and pyridoxal 5'-phosphate antigens, enabling preferential recognition of cancer cells. Presents nucleobase carbonyl adducts generated during oxidative stress. Captures M3Ade, a nucleobase adduct composed of one adenine modified by a malondialdehyde trimer, for recognition by MR1-restricted T cell clones expressing a polyclonal TCR repertoire. In Rattus norvegicus (Rat), this protein is Major histocompatibility complex class I-related protein 1.